The following is a 48-amino-acid chain: uncharacterized protein (48 aa).

An N-terminal signal peptide occupies residues 1-21; sequence MLENNVFRLMILMGGVIALIA.

This is an uncharacterized protein from Bacillus anthracis.